A 630-amino-acid polypeptide reads, in one-letter code: Transferrin-binding protein B (630 aa).

Positions Met-1 to Ala-17 are cleaved as a signal peptide. Cys-18 carries the N-palmitoyl cysteine lipid modification. A lipid anchor (S-diacylglycerol cysteine) is attached at Cys-18. 3 disordered regions span residues Asp-26 to Leu-53, Val-280 to Gly-301, and Asn-591 to Ala-613. The span at Asn-32–Lys-50 shows a compositional bias: polar residues.

Belongs to the TbpB family.

It is found in the cell outer membrane. Its subcellular location is the cell surface. Its function is as follows. Haemophilus acquires iron by extracting it from serum transferrin (TF) in its human host. Acts as a transferrin receptor and is required for transferrin utilization. The protein is Transferrin-binding protein B of Haemophilus influenzae (strain 86-028NP).